The following is a 58-amino-acid chain: Large ribosomal subunit protein uL30 (58 aa).

Belongs to the universal ribosomal protein uL30 family. As to quaternary structure, part of the 50S ribosomal subunit.

The chain is Large ribosomal subunit protein uL30 from Pseudomonas entomophila (strain L48).